Consider the following 149-residue polypeptide: SKP1-like protein 14 (149 aa).

Residues 91–149 (LLAANYLNIKGLLDLSAQTVADRIKDKTPEEIREIFNIENDFTPEEEAAVRKENAWAFE) form an interaction with the F-box domain of F-box proteins region.

Belongs to the SKP1 family. Part of a SCF (SKP1-cullin-F-box) protein ligase complex. Interacts with CPR1/CPR30, At3g61590, At4g39550 and At5g49610. As to expression, restricted to inflorescences, pollen and leaves.

The protein localises to the nucleus. The protein operates within protein modification; protein ubiquitination. In terms of biological role, involved in ubiquitination and subsequent proteasomal degradation of target proteins. Together with CUL1, RBX1 and a F-box protein, it forms a SCF E3 ubiquitin ligase complex. The functional specificity of this complex depends on the type of F-box protein. In the SCF complex, it serves as an adapter that links the F-box protein to CUL1. The sequence is that of SKP1-like protein 14 (ASK14) from Arabidopsis thaliana (Mouse-ear cress).